A 453-amino-acid polypeptide reads, in one-letter code: Ribulose bisphosphate carboxylase large chain (453 aa).

The propeptide occupies 1–2 (MS). Proline 3 carries the post-translational modification N-acetylproline. Lysine 14 is subject to N6,N6,N6-trimethyllysine. Asparagine 123 and threonine 173 together coordinate substrate. The Proton acceptor role is filled by lysine 175. Residue lysine 177 participates in substrate binding. Positions 201, 203, and 204 each coordinate Mg(2+). At lysine 201 the chain carries N6-carboxylysine. Histidine 294 acts as the Proton acceptor in catalysis. Substrate-binding residues include arginine 295, histidine 327, and serine 379.

It belongs to the RuBisCO large chain family. Type I subfamily. In terms of assembly, heterohexadecamer of 8 large chains and 8 small chains; disulfide-linked. The disulfide link is formed within the large subunit homodimers. Mg(2+) is required as a cofactor. Post-translationally, the disulfide bond which can form in the large chain dimeric partners within the hexadecamer appears to be associated with oxidative stress and protein turnover.

It is found in the plastid. It localises to the chloroplast. It carries out the reaction 2 (2R)-3-phosphoglycerate + 2 H(+) = D-ribulose 1,5-bisphosphate + CO2 + H2O. It catalyses the reaction D-ribulose 1,5-bisphosphate + O2 = 2-phosphoglycolate + (2R)-3-phosphoglycerate + 2 H(+). In terms of biological role, ruBisCO catalyzes two reactions: the carboxylation of D-ribulose 1,5-bisphosphate, the primary event in carbon dioxide fixation, as well as the oxidative fragmentation of the pentose substrate in the photorespiration process. Both reactions occur simultaneously and in competition at the same active site. The polypeptide is Ribulose bisphosphate carboxylase large chain (Crucianella angustifolia (Narrow-leaved crosswort)).